The primary structure comprises 160 residues: Cytochrome b6-f complex subunit 4 (160 aa).

3 helical membrane passes run 36–56 (LLYM…GLAV), 95–115 (LLGI…PFIE), and 131–151 (AVFL…ALPI).

It belongs to the cytochrome b family. PetD subfamily. As to quaternary structure, the 4 large subunits of the cytochrome b6-f complex are cytochrome b6, subunit IV (17 kDa polypeptide, PetD), cytochrome f and the Rieske protein, while the 4 small subunits are PetG, PetL, PetM and PetN. The complex functions as a dimer.

The protein resides in the cellular thylakoid membrane. In terms of biological role, component of the cytochrome b6-f complex, which mediates electron transfer between photosystem II (PSII) and photosystem I (PSI), cyclic electron flow around PSI, and state transitions. In Synechococcus elongatus (strain ATCC 33912 / PCC 7942 / FACHB-805) (Anacystis nidulans R2), this protein is Cytochrome b6-f complex subunit 4.